The sequence spans 362 residues: Phosphoserine aminotransferase (362 aa).

Arg43 serves as a coordination point for L-glutamate. Pyridoxal 5'-phosphate contacts are provided by residues Ala77–Arg78, Trp103, Thr153, Asp173, and Gln196. N6-(pyridoxal phosphate)lysine is present on Lys197.

It belongs to the class-V pyridoxal-phosphate-dependent aminotransferase family. SerC subfamily. Homodimer. Pyridoxal 5'-phosphate is required as a cofactor.

It localises to the cytoplasm. It carries out the reaction O-phospho-L-serine + 2-oxoglutarate = 3-phosphooxypyruvate + L-glutamate. It catalyses the reaction 4-(phosphooxy)-L-threonine + 2-oxoglutarate = (R)-3-hydroxy-2-oxo-4-phosphooxybutanoate + L-glutamate. Its pathway is amino-acid biosynthesis; L-serine biosynthesis; L-serine from 3-phospho-D-glycerate: step 2/3. It functions in the pathway cofactor biosynthesis; pyridoxine 5'-phosphate biosynthesis; pyridoxine 5'-phosphate from D-erythrose 4-phosphate: step 3/5. Catalyzes the reversible conversion of 3-phosphohydroxypyruvate to phosphoserine and of 3-hydroxy-2-oxo-4-phosphonooxybutanoate to phosphohydroxythreonine. The protein is Phosphoserine aminotransferase of Legionella pneumophila (strain Lens).